A 653-amino-acid polypeptide reads, in one-letter code: Protein CBFA2T3 (653 aa).

Residues 1-10 (MPASRLRDRA) are compositionally biased toward basic and acidic residues. The tract at residues 1 to 109 (MPASRLRDRA…HTHREDGPAT (109 aa)) is disordered. Positions 1 to 127 (MPASRLRDRA…CLKWSMVCLL (127 aa)) are required for nucleolar targeting (in isoform 1). Residues 1–430 (MPASRLRDRA…RRCQEADREE (430 aa)) form a mediates interaction with PDE7A (in isoform 2) region. A mediates localization to the nucleus region spans residues 1–435 (MPASRLRDRA…ADREELNHWA (435 aa)). The segment covering 11–23 (ASSASGSTCGSMS) has biased composition (low complexity). The segment covering 75-86 (STPPSMPPPPPA) has biased composition (pro residues). Residues 145 to 242 (PNGFSNGPAT…IPFLKANLPL (98 aa)) are interaction with ZBTB33. In terms of domain architecture, TAFH spans 171–266 (ARQLSKLKRF…TPAQYLAQHE (96 aa)). Residues 176 to 268 (KLKRFLTTLQ…AQYLAQHEQL (93 aa)) are interaction with HIF1A. The segment at 284–342 (LLEVNENGKRRTPDRTKENGSDRDPLHPEHLSKRPCTLNPAQRYSPSNGPPQPTPPPHY) is disordered. The span at 289–315 (ENGKRRTPDRTKENGSDRDPLHPEHLS) shows a compositional bias: basic and acidic residues. The segment covering 331–341 (NGPPQPTPPPH) has biased composition (pro residues). The segment at 394-412 (EEWKHLNNLLNCIMDMVEK) is nervy homology region 2 (NHR2); essential for down-regulation of PFKFB3, PFKFB4 and PDK1 expression. The segment covering 434 to 446 (WARRYSDAEDTKK) has biased composition (basic and acidic residues). The segment at 434–472 (WARRYSDAEDTKKGPAPAAARPRSSSAGPEGPQLDVPRE) is disordered. Residues 447–462 (GPAPAAARPRSSSAGP) are compositionally biased toward low complexity. Phosphoserine is present on residues Ser457 and Ser459. The residue at position 479 (Thr479) is a Phosphothreonine. The interval 485–506 (DIWRKAEEAVNEVKRQAMSELQ) is mediates interaction with PRKAR2A. The nervy homology region 3 (NHR3); essential for down-regulation of PFKFB3, PFKFB4 and PDK1 expression stretch occupies residues 485–533 (DIWRKAEEAVNEVKRQAMSELQKAVSDAERKAHELITTERAKMERALAE). Residues 488–543 (RKAEEAVNEVKRQAMSELQKAVSDAERKAHELITTERAKMERALAEAKRQASEDAL) are a coiled coil. Residues Cys556, Cys559, Cys567, Cys570, Cys576, Cys580, His588, and Cys592 each coordinate Zn(2+). An MYND-type zinc finger spans residues 556–592 (CWNCGRKASETCSGCNAARYCGSFCQHRDWEKHHHVC). Residues 603 to 653 (VADPVPGPPEAAHSLGPSLPVGAASPSEAGSAGPSRPGSPSPPGPLDTVPR) are disordered. Residues 622 to 638 (PVGAASPSEAGSAGPSR) are compositionally biased toward low complexity. Residues Ser637 and Ser641 each carry the phosphoserine modification. Residue Thr650 is modified to Phosphothreonine.

The protein belongs to the CBFA2T family. In terms of assembly, homooligomer. Homotetramerization is mediated by nervy homology region 2 (NRH2). Can interact with RUNX1T1 and CBFA2T2; heterotetramerization between members of the CBFA2T family is proposed. Component of a TAL-1 complex composed at least of CBFA2T3, LDB1, TAL1 and TCF3. Interacts with ERBB4, HDAC1, HDAC2, HDAC3, HDAC6, HDAC8, NCOR1, NCOR2, and ZNF652. According to PubMed:12242670, may not interact with HDAC6. Interacts with PLXNA1, PLXNA3 and PRKAR1A. Isoform 2 interacts with PRKAR2A, PDE7A and probably PDE4A. Interacts with ZBTB4, ZBTB38 and ZBTB33. Interacts with HIF1A and EGLN1. Interacts with the AML1-MTG8/ETO fusion protein. Widely expressed with higher expression in heart, pancreas, skeletal muscle, spleen, thymus and peripheral blood leukocytes. Expressed in hematopoietic cells (at protein level).

The protein localises to the nucleus. Its subcellular location is the nucleolus. It localises to the nucleoplasm. It is found in the golgi apparatus membrane. In terms of biological role, transcriptional corepressor which facilitates transcriptional repression via its association with DNA-binding transcription factors and recruitment of other corepressors and histone-modifying enzymes. Can repress the expression of MMP7 in a ZBTB33-dependent manner. Reduces the protein levels and stability of the transcriptinal regulator HIF1A; interacts with EGLN1 and promotes the HIF1A prolyl hydroxylation-dependent ubiquitination and proteasomal degradation pathway. Contributes to inhibition of glycolysis and stimulation of mitochondrial respiration by down-regulating the expression of glycolytic genes including PFKFB3, PFKFB4, PDK1, PFKP, LDHA and HK1 which are direct targets of HIF1A. Regulates the proliferation and the differentiation of erythroid progenitors by repressing the expression of TAL1 target genes. Plays a role in granulocyte differentiation. Isoform 2 functions as an A-kinase-anchoring protein. The polypeptide is Protein CBFA2T3 (CBFA2T3) (Homo sapiens (Human)).